The sequence spans 611 residues: MVKNLIFWLVITVVLMSIFQNFNTNDVNNHKVDYSTFLSEVNQDQIREAYINGRMISVTKKDSSKYTTYIPINDPKLLDNLLVKRVKIIGAIPEEPSLFISILISWFPMLLLIGVWIFFMRQMQMGGGKGAMSFGKSKARMLSEDQIQTTFADVAGCDEAKEEVSELVEYLKEPSRFQKLGGKIPKGILMVGPPGTGKTLLAKAIAGEAKVPFFTISGSDFVEMFVGVGASRVRDMFEHSRKSAPCIIFIDEIDAVGRQRGAGLGGGHDEREQTLNQMLVEMDGFDGNEGIILIAATNRPDVLDPALLRPGRFDRQVIVALPDIRGREQILKVHMRKVPLSKDVDPMIIARGTPGFSGADLANLVNEAALFAARLDKRVVSMLEFERAKDKMMMGSERRSMVMSDFQKESTAYHEAGHVIIGRLVPDHDPAHKVTIIPRGRALGVTFFLPESDTLSISRQKLESQISTLYGGRLAEEIIYGAKNVSTGAYNDIKIATSLAKNMVTQWGFSEKLGPLLYAEEEGEIFLGRSVAKAKHMSDETARIIDEEVKLLIEINYSRARNILNENIDILHAMKEALIKYETIDAFQIDDLMKRREVRQPKGWIETDTNK.

Residue M1 is a topological domain, cytoplasmic. The helical transmembrane segment at 2-22 (VKNLIFWLVITVVLMSIFQNF) threads the bilayer. At 23-98 (NTNDVNNHKV…IGAIPEEPSL (76 aa)) the chain is on the extracellular side. A helical transmembrane segment spans residues 99–119 (FISILISWFPMLLLIGVWIFF). Over 120-611 (MRQMQMGGGK…KGWIETDTNK (492 aa)) the chain is Cytoplasmic. Residue 192-199 (GPPGTGKT) participates in ATP binding. H414 serves as a coordination point for Zn(2+). Residue E415 is part of the active site. Zn(2+) contacts are provided by H418 and D492.

It in the central section; belongs to the AAA ATPase family. The protein in the C-terminal section; belongs to the peptidase M41 family. As to quaternary structure, homohexamer. It depends on Zn(2+) as a cofactor.

It localises to the cell membrane. Functionally, acts as a processive, ATP-dependent zinc metallopeptidase for both cytoplasmic and membrane proteins. Plays a role in the quality control of integral membrane proteins. This is ATP-dependent zinc metalloprotease FtsH from Buchnera aphidicola subsp. Acyrthosiphon pisum (strain APS) (Acyrthosiphon pisum symbiotic bacterium).